The chain runs to 398 residues: Acetate kinase (398 aa).

Mg(2+) is bound at residue Asn-8. An ATP-binding site is contributed by Lys-15. Arg-89 provides a ligand contact to substrate. The active-site Proton donor/acceptor is Asp-146. ATP-binding positions include 206–210, 283–285, and 331–335; these read HIGNG, DMR, and GMGEN. Glu-383 contributes to the Mg(2+) binding site.

It belongs to the acetokinase family. As to quaternary structure, homodimer. It depends on Mg(2+) as a cofactor. The cofactor is Mn(2+).

Its subcellular location is the cytoplasm. The enzyme catalyses acetate + ATP = acetyl phosphate + ADP. Its pathway is metabolic intermediate biosynthesis; acetyl-CoA biosynthesis; acetyl-CoA from acetate: step 1/2. In terms of biological role, catalyzes the formation of acetyl phosphate from acetate and ATP. Can also catalyze the reverse reaction. The protein is Acetate kinase of Streptococcus pyogenes serotype M5 (strain Manfredo).